The chain runs to 311 residues: GTP cyclohydrolase MptA (311 aa).

The protein belongs to the GTP cyclohydrolase IV family. In terms of assembly, homodimer. The cofactor is Fe(2+).

It carries out the reaction GTP + H2O = 7,8-dihydroneopterin 2',3'-cyclic phosphate + formate + diphosphate + H(+). It functions in the pathway cofactor biosynthesis; 5,6,7,8-tetrahydromethanopterin biosynthesis. Converts GTP to 7,8-dihydro-D-neopterin 2',3'-cyclic phosphate, the first intermediate in the biosynthesis of coenzyme methanopterin. The protein is GTP cyclohydrolase MptA of Methanobrevibacter smithii (strain ATCC 35061 / DSM 861 / OCM 144 / PS).